Reading from the N-terminus, the 117-residue chain is Peptidyl-tRNA hydrolase (117 aa).

This sequence belongs to the PTH2 family.

It is found in the cytoplasm. It catalyses the reaction an N-acyl-L-alpha-aminoacyl-tRNA + H2O = an N-acyl-L-amino acid + a tRNA + H(+). In terms of biological role, the natural substrate for this enzyme may be peptidyl-tRNAs which drop off the ribosome during protein synthesis. The chain is Peptidyl-tRNA hydrolase from Metallosphaera sedula (strain ATCC 51363 / DSM 5348 / JCM 9185 / NBRC 15509 / TH2).